A 303-amino-acid polypeptide reads, in one-letter code: MPEVETKIIPNEKEDEDEDGYIEEEDEDFQPEKDKLGGGSDDSDASDGGDDYDDGVNRDKGRNKVDYSRIESESGGLIKTRRARQAEEEYAKTHKYESLTVESIPAKVNSIWEELQEASKNRLLSSSGKVGSVLDGSKEARSTTAAQQEDKILIERNYKFAGETVHEKKWVSRSSAEGQEYLNSLKFKQQAPAAPVQLEKAVRTKSNESRQHLRRPLKRPPLLEQIISGGLRPKLTTLEKSQLDWASYVDRAGLNDELVLHNKDGFLARQEFLQRVGSAEDERYKELRRQQLAQQLQQDSEAS.

The span at 1 to 12 shows a compositional bias: basic and acidic residues; sequence MPEVETKIIPNE. 3 disordered regions span residues 1-92, 126-146, and 199-219; these read MPEV…EYAK, SSGK…TTAA, and EKAV…PLKR. Composition is skewed to acidic residues over residues 13–29 and 41–54; these read KEDE…DEDF and DDSD…DYDD. Residues 55 to 72 show a composition bias toward basic and acidic residues; the sequence is GVNRDKGRNKVDYSRIES. Over residues 126 to 135 the composition is skewed to low complexity; that stretch reads SSGKVGSVLD. Basic and acidic residues predominate over residues 200-211; it reads KAVRTKSNESRQ. Position 209 is a phosphoserine (Ser-209). Positions 217 to 294 constitute a BCNT-C domain; that stretch reads LKRPPLLEQI…KELRRQQLAQ (78 aa).

It belongs to the SWC5 family. Component of the SWR1 chromatin remodeling complex composed of at least ACT1, ARP4, RVB1, RVB2, ARP6, YAF9, VPS71, VPS72, SWC3, SWC4, SWC5, SWC7 and SWR1, and perhaps BDF1.

It is found in the nucleus. In terms of biological role, component of the SWR1 complex which mediates the ATP-dependent exchange of histone H2A for the H2A variant HZT1 leading to transcriptional regulation of selected genes by chromatin remodeling. Involved in chromosome stability. In Saccharomyces cerevisiae (strain ATCC 204508 / S288c) (Baker's yeast), this protein is SWR1-complex protein 5 (SWC5).